Consider the following 178-residue polypeptide: Large ribosomal subunit protein bL17 (178 aa).

Basic and acidic residues predominate over residues aspartate 126–glutamate 139. The tract at residues aspartate 126–alanine 178 is disordered. Over residues glutamine 140–alanine 163 the composition is skewed to low complexity. Residues alanine 164–alanine 178 show a composition bias toward basic and acidic residues.

The protein belongs to the bacterial ribosomal protein bL17 family. In terms of assembly, part of the 50S ribosomal subunit. Contacts protein L32.

The polypeptide is Large ribosomal subunit protein bL17 (Nocardia farcinica (strain IFM 10152)).